Here is a 37-residue protein sequence, read N- to C-terminus: Cytochrome b6-f complex subunit 5 (37 aa).

Residues 5–25 (LLSGIVLGLIPITLAGLFVTA) form a helical membrane-spanning segment.

It belongs to the PetG family. As to quaternary structure, the 4 large subunits of the cytochrome b6-f complex are cytochrome b6, subunit IV (17 kDa polypeptide, PetD), cytochrome f and the Rieske protein, while the 4 small subunits are PetG, PetL, PetM and PetN. The complex functions as a dimer.

It is found in the plastid. The protein localises to the chloroplast thylakoid membrane. Its function is as follows. Component of the cytochrome b6-f complex, which mediates electron transfer between photosystem II (PSII) and photosystem I (PSI), cyclic electron flow around PSI, and state transitions. PetG is required for either the stability or assembly of the cytochrome b6-f complex. This Cryptomeria japonica (Japanese cedar) protein is Cytochrome b6-f complex subunit 5.